We begin with the raw amino-acid sequence, 156 residues long: 6,7-dimethyl-8-ribityllumazine synthase (156 aa).

5-amino-6-(D-ribitylamino)uracil-binding positions include Phe22, 57 to 59 (AYE), and 81 to 83 (TVI). 86 to 87 (GT) contributes to the (2S)-2-hydroxy-3-oxobutyl phosphate binding site. The active-site Proton donor is His89. Position 114 (Phe114) interacts with 5-amino-6-(D-ribitylamino)uracil. Residue Arg128 coordinates (2S)-2-hydroxy-3-oxobutyl phosphate.

The protein belongs to the DMRL synthase family. In terms of assembly, forms an icosahedral capsid composed of 60 subunits, arranged as a dodecamer of pentamers.

The enzyme catalyses (2S)-2-hydroxy-3-oxobutyl phosphate + 5-amino-6-(D-ribitylamino)uracil = 6,7-dimethyl-8-(1-D-ribityl)lumazine + phosphate + 2 H2O + H(+). Its pathway is cofactor biosynthesis; riboflavin biosynthesis; riboflavin from 2-hydroxy-3-oxobutyl phosphate and 5-amino-6-(D-ribitylamino)uracil: step 1/2. Its function is as follows. Catalyzes the formation of 6,7-dimethyl-8-ribityllumazine by condensation of 5-amino-6-(D-ribitylamino)uracil with 3,4-dihydroxy-2-butanone 4-phosphate. This is the penultimate step in the biosynthesis of riboflavin. In Mannheimia succiniciproducens (strain KCTC 0769BP / MBEL55E), this protein is 6,7-dimethyl-8-ribityllumazine synthase.